Reading from the N-terminus, the 270-residue chain is 5'-nucleotidase SurE (270 aa).

A divalent metal cation contacts are provided by aspartate 14, aspartate 15, serine 46, and asparagine 104.

Belongs to the SurE nucleotidase family. It depends on a divalent metal cation as a cofactor.

It is found in the cytoplasm. The catalysed reaction is a ribonucleoside 5'-phosphate + H2O = a ribonucleoside + phosphate. In terms of biological role, nucleotidase that shows phosphatase activity on nucleoside 5'-monophosphates. In Microcystis aeruginosa (strain NIES-843 / IAM M-2473), this protein is 5'-nucleotidase SurE.